Here is a 590-residue protein sequence, read N- to C-terminus: Aspartate--tRNA(Asp/Asn) ligase (590 aa).

An L-aspartate-binding site is contributed by Glu175. Positions 199–202 (QQFK) are aspartate. L-aspartate-binding residues include Arg221 and His452. 221-223 (RDE) lines the ATP pocket. Glu485 contacts ATP. Arg492 serves as a coordination point for L-aspartate. 537–540 (GIDR) contributes to the ATP binding site.

Belongs to the class-II aminoacyl-tRNA synthetase family. Type 1 subfamily. As to quaternary structure, homodimer.

The protein resides in the cytoplasm. It carries out the reaction tRNA(Asx) + L-aspartate + ATP = L-aspartyl-tRNA(Asx) + AMP + diphosphate. Its function is as follows. Aspartyl-tRNA synthetase with relaxed tRNA specificity since it is able to aspartylate not only its cognate tRNA(Asp) but also tRNA(Asn). Reaction proceeds in two steps: L-aspartate is first activated by ATP to form Asp-AMP and then transferred to the acceptor end of tRNA(Asp/Asn). This is Aspartate--tRNA(Asp/Asn) ligase from Dinoroseobacter shibae (strain DSM 16493 / NCIMB 14021 / DFL 12).